A 1112-amino-acid polypeptide reads, in one-letter code: Mediator of RNA polymerase II transcription subunit 14 (1112 aa).

Belongs to the Mediator complex subunit 14 family. As to quaternary structure, component of the Mediator complex.

The protein resides in the nucleus. In terms of biological role, component of the Mediator complex, a coactivator involved in the regulated transcription of nearly all RNA polymerase II-dependent genes. Mediator functions as a bridge to convey information from gene-specific regulatory proteins to the basal RNA polymerase II transcription machinery. Mediator is recruited to promoters by direct interactions with regulatory proteins and serves as a scaffold for the assembly of a functional preinitiation complex with RNA polymerase II and the general transcription factors. This chain is Mediator of RNA polymerase II transcription subunit 14 (RGR1), found in Scheffersomyces stipitis (strain ATCC 58785 / CBS 6054 / NBRC 10063 / NRRL Y-11545) (Yeast).